The chain runs to 40 residues: Cytochrome c3 hydrogenase small chain (40 aa).

Requires Fe cation as cofactor.

It catalyses the reaction 2 Fe(III)-[cytochrome c3] + H2 = 2 Fe(II)-[cytochrome c3] + 2 H(+). The chain is Cytochrome c3 hydrogenase small chain (hoxK) from Acidithiobacillus ferrooxidans (Thiobacillus ferrooxidans).